The following is a 276-amino-acid chain: NH(3)-dependent NAD(+) synthetase (276 aa).

Gly-43–Ser-50 provides a ligand contact to ATP. Asp-49 contributes to the Mg(2+) binding site. A deamido-NAD(+)-binding site is contributed by Arg-146. An ATP-binding site is contributed by Thr-166. Glu-171 provides a ligand contact to Mg(2+). Deamido-NAD(+)-binding residues include Lys-179 and Asp-186. The ATP site is built by Lys-195 and Thr-217. His-266 to Lys-267 is a deamido-NAD(+) binding site.

Belongs to the NAD synthetase family. Homodimer.

It catalyses the reaction deamido-NAD(+) + NH4(+) + ATP = AMP + diphosphate + NAD(+) + H(+). It participates in cofactor biosynthesis; NAD(+) biosynthesis; NAD(+) from deamido-NAD(+) (ammonia route): step 1/1. Its function is as follows. Catalyzes the ATP-dependent amidation of deamido-NAD to form NAD. Uses ammonia as a nitrogen source. The polypeptide is NH(3)-dependent NAD(+) synthetase (Shewanella halifaxensis (strain HAW-EB4)).